A 422-amino-acid polypeptide reads, in one-letter code: Interleukin-11 receptor subunit alpha (422 aa).

Positions 1–22 are cleaved as a signal peptide; sequence MSSSCSGLSRVLVAVATALVSA. At 24–370 the chain is on the extracellular side; that stretch reads SPCPQAWGPP…DSVEQVAVLV (347 aa). The Ig-like C2-type domain occupies 27–110; sequence PQAWGPPGVQ…LGGTVTLQLG (84 aa). Cystine bridges form between cysteine 48/cysteine 94, cysteine 120/cysteine 130, and cysteine 170/cysteine 180. 2 Fibronectin type-III domains span residues 112–219 and 220–317; these read PPAR…LRPD and PPQG…TPST. An N-linked (GlcNAc...) asparagine glycan is attached at asparagine 127. Asparagine 194 is a glycosylation site (N-linked (GlcNAc...) asparagine). A WSXWS motif motif is present at residues 304 to 308; it reads WSTWS. The interval 335–355 is disordered; that stretch reads EVEPQVDSPAPPRPSLQPHPR. Residues 371–391 traverse the membrane as a helical segment; it reads SLGILSFLGLVAGALALGLWL. The Cytoplasmic segment spans residues 392-422; sequence RLRRGGKDGSPKPGFLASVIPVDRHPGAPNL.

It belongs to the type I cytokine receptor family. Type 3 subfamily. On IL11 binding, forms a multimer complex with IL6ST/gp130. A short soluble form is also released from the membrane by proteolysis. The sIL11RA is formed either by limited proteolysis of membrane-bound receptors, a process referred to as ectodomain shedding, or directly secreted from the cells after alternative mRNA splicing. mIL11RA is cleaved by the proteases ADAM10, ELANE and PRTN3.

It is found in the membrane. The protein localises to the secreted. Its function is as follows. Receptor for interleukin-11 (IL11). The receptor systems for IL6, LIF, OSM, CNTF, IL11 and CT1 can utilize IL6ST for initiating signal transmission. The IL11/IL11RA/IL6ST complex may be involved in the control of proliferation and/or differentiation of skeletogenic progenitor or other mesenchymal cells. Essential for the normal development of craniofacial bones and teeth. Restricts suture fusion and tooth number. Functionally, soluble form of IL11 receptor (sIL11RA) that acts as an agonist of IL11 activity. The IL11:sIL11RA complex binds to IL6ST/gp130 on cell surfaces and induces signaling also on cells that do not express membrane-bound IL11RA in a process called IL11 trans-signaling. This chain is Interleukin-11 receptor subunit alpha (IL11RA), found in Pongo abelii (Sumatran orangutan).